Consider the following 146-residue polypeptide: Hemoglobin subunit beta (146 aa).

Val-1 bears the N-acetylvaline mark. In terms of domain architecture, Globin spans 2-146; that stretch reads HLTADEKVSL…VANALAHKYH (145 aa). Ser-44 carries the post-translational modification Phosphoserine. Lys-59 is subject to N6-acetyllysine. A heme b-binding site is contributed by His-63. Lys-82 is subject to N6-acetyllysine. His-92 provides a ligand contact to heme b. Cys-93 is subject to S-nitrosocysteine. Residue Lys-144 is modified to N6-acetyllysine.

The protein belongs to the globin family. As to quaternary structure, heterotetramer of two alpha chains and two beta chains. As to expression, red blood cells.

In terms of biological role, involved in oxygen transport from the lung to the various peripheral tissues. The sequence is that of Hemoglobin subunit beta from Tamias striatus (Eastern chipmunk).